Consider the following 298-residue polypeptide: N-acetylmuramic acid 6-phosphate etherase (298 aa).

Residues 54-217 form the SIS domain; the sequence is CISAIKNHGR…STVTMIKLGK (164 aa). The Proton donor role is filled by Glu-82. Glu-113 is an active-site residue.

Belongs to the GCKR-like family. MurNAc-6-P etherase subfamily. Homodimer.

It catalyses the reaction N-acetyl-D-muramate 6-phosphate + H2O = N-acetyl-D-glucosamine 6-phosphate + (R)-lactate. Its pathway is amino-sugar metabolism; N-acetylmuramate degradation. In terms of biological role, specifically catalyzes the cleavage of the D-lactyl ether substituent of MurNAc 6-phosphate, producing GlcNAc 6-phosphate and D-lactate. The sequence is that of N-acetylmuramic acid 6-phosphate etherase from Petrotoga mobilis (strain DSM 10674 / SJ95).